A 158-amino-acid chain; its full sequence is Arginine repressor (158 aa).

It belongs to the ArgR family.

The protein localises to the cytoplasm. Its pathway is amino-acid biosynthesis; L-arginine biosynthesis [regulation]. Regulates arginine biosynthesis genes. This Phocaeicola vulgatus (strain ATCC 8482 / DSM 1447 / JCM 5826 / CCUG 4940 / NBRC 14291 / NCTC 11154) (Bacteroides vulgatus) protein is Arginine repressor.